Consider the following 568-residue polypeptide: Protein OCTOPUS-like (568 aa).

7 disordered regions span residues 1-27 (MNLS…RLST), 78-99 (LFKP…RPGF), 168-203 (EEAE…ELKP), 242-276 (QKQK…PRFS), 360-428 (PGGS…DKKS), 446-512 (DDEE…SKDG), and 526-558 (RSWK…SHGH). Residues 82 to 93 (SSSGTNNSNGNG) are compositionally biased toward low complexity. Over residues 168-179 (EEAEIEEDEENG) the composition is skewed to acidic residues. A compositionally biased stretch (basic and acidic residues) spans 180–193 (EKDPGEIVEEKSSE). The residue at position 260 (S260) is a Phosphoserine. Positions 400-423 (SVSNSTTTIDSNSMETAENKGNQN) are enriched in polar residues. Over residues 532-546 (GGSGGGGGGGGGGGW) the composition is skewed to gly residues.

The protein belongs to the OCTOPUS family. Phosphorylation at Ser-260 amplifies the promotion of protophloem differentiation.

It is found in the cell membrane. The protein localises to the cytoplasm. Functionally, potentiates primary root protophloem differentiation. Regulates roots architecture. The chain is Protein OCTOPUS-like from Arabidopsis thaliana (Mouse-ear cress).